The sequence spans 161 residues: Phosphopantetheine adenylyltransferase (161 aa).

Thr-9 serves as a coordination point for substrate. Residues 9 to 10 and His-17 contribute to the ATP site; that span reads TF. Substrate-binding residues include Lys-41, Leu-73, and Arg-87. ATP is bound by residues 88-90, Glu-98, and 123-129; these read GLR and YQFISGT.

This sequence belongs to the bacterial CoaD family. Homohexamer. It depends on Mg(2+) as a cofactor.

The protein resides in the cytoplasm. The catalysed reaction is (R)-4'-phosphopantetheine + ATP + H(+) = 3'-dephospho-CoA + diphosphate. The protein operates within cofactor biosynthesis; coenzyme A biosynthesis; CoA from (R)-pantothenate: step 4/5. Reversibly transfers an adenylyl group from ATP to 4'-phosphopantetheine, yielding dephospho-CoA (dPCoA) and pyrophosphate. The polypeptide is Phosphopantetheine adenylyltransferase (Cupriavidus necator (strain ATCC 17699 / DSM 428 / KCTC 22496 / NCIMB 10442 / H16 / Stanier 337) (Ralstonia eutropha)).